Reading from the N-terminus, the 453-residue chain is Homogentisate 1,2-dioxygenase (453 aa).

His-306 serves as the catalytic Proton acceptor. Fe cation is bound by residues His-349 and Glu-355. The homogentisate site is built by Tyr-364 and His-385. His-385 lines the Fe cation pocket.

Belongs to the homogentisate dioxygenase family. As to quaternary structure, hexamer; dimer of trimers. It depends on Fe cation as a cofactor.

The catalysed reaction is homogentisate + O2 = 4-maleylacetoacetate + H(+). Its pathway is amino-acid degradation; L-phenylalanine degradation; acetoacetate and fumarate from L-phenylalanine: step 4/6. In terms of biological role, involved in the catabolism of homogentisate (2,5-dihydroxyphenylacetate or 2,5-OH-PhAc), a central intermediate in the degradation of phenylalanine and tyrosine. Catalyzes the oxidative ring cleavage of the aromatic ring of homogentisate to yield maleylacetoacetate. In Rhizobium johnstonii (strain DSM 114642 / LMG 32736 / 3841) (Rhizobium leguminosarum bv. viciae), this protein is Homogentisate 1,2-dioxygenase.